Reading from the N-terminus, the 408-residue chain is Phosphoglycerate kinase (408 aa).

Residues 24-26 (DLN), Arg-39, 62-65 (HLGR), Arg-121, and Arg-161 each bind substrate. ATP is bound by residues Lys-211, Gly-307, Glu-338, and 364 to 367 (GGDS).

It belongs to the phosphoglycerate kinase family. As to quaternary structure, monomer.

It is found in the cytoplasm. It catalyses the reaction (2R)-3-phosphoglycerate + ATP = (2R)-3-phospho-glyceroyl phosphate + ADP. It functions in the pathway carbohydrate degradation; glycolysis; pyruvate from D-glyceraldehyde 3-phosphate: step 2/5. The sequence is that of Phosphoglycerate kinase from Pseudarthrobacter chlorophenolicus (strain ATCC 700700 / DSM 12829 / CIP 107037 / JCM 12360 / KCTC 9906 / NCIMB 13794 / A6) (Arthrobacter chlorophenolicus).